Reading from the N-terminus, the 92-residue chain is Arrestin-C (92 aa).

Belongs to the arrestin family. In terms of assembly, homodimer; disulfide-linked in response to retinal illumination. Interacts with CXCR4; the interaction is dependent on the C-terminal phosphorylation of CXCR4 and modulates the calcium ion mobilization activity of CXCR4. Interacts with GPR84. Retina and pineal gland.

Its subcellular location is the photoreceptor inner segment. It localises to the cell projection. It is found in the cilium. The protein localises to the photoreceptor outer segment. Functionally, may play a role in an as yet undefined retina-specific signal transduction. Could bind to photoactivated-phosphorylated red/green opsins. This Rattus norvegicus (Rat) protein is Arrestin-C (Arr3).